We begin with the raw amino-acid sequence, 81 residues long: ATP synthase subunit c (81 aa).

Helical transmembrane passes span 7–27 and 57–77; these read AASVVAAGLAVGLAAIGPGIG and LAFMESLTIYGLVVALVLLFA.

It belongs to the ATPase C chain family. F-type ATPases have 2 components, F(1) - the catalytic core - and F(0) - the membrane proton channel. F(1) has five subunits: alpha(3), beta(3), gamma(1), delta(1), epsilon(1). F(0) has four main subunits: a(1), b(1), b'(1) and c(10-14). The alpha and beta chains form an alternating ring which encloses part of the gamma chain. F(1) is attached to F(0) by a central stalk formed by the gamma and epsilon chains, while a peripheral stalk is formed by the delta, b and b' chains.

It localises to the cellular thylakoid membrane. Functionally, f(1)F(0) ATP synthase produces ATP from ADP in the presence of a proton or sodium gradient. F-type ATPases consist of two structural domains, F(1) containing the extramembraneous catalytic core and F(0) containing the membrane proton channel, linked together by a central stalk and a peripheral stalk. During catalysis, ATP synthesis in the catalytic domain of F(1) is coupled via a rotary mechanism of the central stalk subunits to proton translocation. Its function is as follows. Key component of the F(0) channel; it plays a direct role in translocation across the membrane. A homomeric c-ring of between 10-14 subunits forms the central stalk rotor element with the F(1) delta and epsilon subunits. The chain is ATP synthase subunit c from Synechococcus sp. (strain CC9311).